The following is a 197-amino-acid chain: Large ribosomal subunit protein bL25 (197 aa).

It belongs to the bacterial ribosomal protein bL25 family. CTC subfamily. As to quaternary structure, part of the 50S ribosomal subunit; part of the 5S rRNA/L5/L18/L25 subcomplex. Contacts the 5S rRNA. Binds to the 5S rRNA independently of L5 and L18.

This is one of the proteins that binds to the 5S RNA in the ribosome where it forms part of the central protuberance. The sequence is that of Large ribosomal subunit protein bL25 from Carboxydothermus hydrogenoformans (strain ATCC BAA-161 / DSM 6008 / Z-2901).